The following is an 89-amino-acid chain: Cytochrome c oxidase subunit 7A, mitochondrial (89 aa).

The N-terminal 31 residues, 1–31 (MMNLSRAVVRSFATTAGRRSAAVPKDQIEKG), are a transit peptide targeting the mitochondrion. Over 32–58 (YFEIRKVQEHFQKKDGKPVFLKGSVVD) the chain is Mitochondrial matrix. The chain crosses the membrane as a helical span at residues 59-81 (NVLYRVTVALALVGIGGMGKLFY). The Mitochondrial intermembrane portion of the chain corresponds to 82 to 89 (ELSVPKKE).

The protein belongs to the cytochrome c oxidase VIIa family. Component of the cytochrome c oxidase (complex IV, CIV), a multisubunit enzyme composed of a catalytic core of 3 subunits and several supernumerary subunits. The complex exists as a monomer or a dimer and forms supercomplexes (SCs) in the inner mitochondrial membrane with ubiquinol-cytochrome c oxidoreductase (cytochrome b-c1 complex, complex III, CIII).

The protein resides in the mitochondrion inner membrane. The protein operates within energy metabolism; oxidative phosphorylation. Its function is as follows. Component of the cytochrome c oxidase, the last enzyme in the mitochondrial electron transport chain which drives oxidative phosphorylation. The respiratory chain contains 3 multisubunit complexes succinate dehydrogenase (complex II, CII), ubiquinol-cytochrome c oxidoreductase (cytochrome b-c1 complex, complex III, CIII) and cytochrome c oxidase (complex IV, CIV), that cooperate to transfer electrons derived from NADH and succinate to molecular oxygen, creating an electrochemical gradient over the inner membrane that drives transmembrane transport and the ATP synthase. Cytochrome c oxidase is the component of the respiratory chain that catalyzes the reduction of oxygen to water. Electrons originating from reduced cytochrome c in the intermembrane space (IMS) are transferred via the dinuclear copper A center (CU(A)) of subunit 2 and heme A of subunit 1 to the active site in subunit 1, a binuclear center (BNC) formed by heme A3 and copper B (CU(B)). The BNC reduces molecular oxygen to 2 water molecules using 4 electrons from cytochrome c in the IMS and 4 protons from the mitochondrial matrix. The polypeptide is Cytochrome c oxidase subunit 7A, mitochondrial (Drosophila melanogaster (Fruit fly)).